The chain runs to 224 residues: Dehydration-responsive element-binding protein 1G (224 aa).

The segment covering 1–16 (MDVSAALSSDYSSGTP) has biased composition (polar residues). The segment at 1 to 46 (MDVSAALSSDYSSGTPSPVAADADDGSSAYMTVSSAPPKRRAGRTK) is disordered. A DNA-binding region (AP2/ERF) is located at residues 54–111 (VFKGVRRRNPGRWVCEVREPHGKQRIWLGTFETAEMAARAHDVAALALRGRAACLNFA).

Belongs to the AP2/ERF transcription factor family. ERF subfamily.

It localises to the nucleus. Transcriptional activator that binds specifically to the DNA sequence 5'-[AG]CCGAC-3'. Binding to the C-repeat/DRE element mediates high salinity- and dehydration-inducible transcription. The polypeptide is Dehydration-responsive element-binding protein 1G (DREB1G) (Oryza sativa subsp. indica (Rice)).